We begin with the raw amino-acid sequence, 154 residues long: 6,7-dimethyl-8-ribityllumazine synthase (154 aa).

Residues F26, 60–62 (ALE), and 84–86 (CII) contribute to the 5-amino-6-(D-ribitylamino)uracil site. 89-90 (ET) serves as a coordination point for (2S)-2-hydroxy-3-oxobutyl phosphate. The active-site Proton donor is the H92. N117 is a binding site for 5-amino-6-(D-ribitylamino)uracil. R131 contacts (2S)-2-hydroxy-3-oxobutyl phosphate.

This sequence belongs to the DMRL synthase family.

The catalysed reaction is (2S)-2-hydroxy-3-oxobutyl phosphate + 5-amino-6-(D-ribitylamino)uracil = 6,7-dimethyl-8-(1-D-ribityl)lumazine + phosphate + 2 H2O + H(+). The protein operates within cofactor biosynthesis; riboflavin biosynthesis; riboflavin from 2-hydroxy-3-oxobutyl phosphate and 5-amino-6-(D-ribitylamino)uracil: step 1/2. Functionally, catalyzes the formation of 6,7-dimethyl-8-ribityllumazine by condensation of 5-amino-6-(D-ribitylamino)uracil with 3,4-dihydroxy-2-butanone 4-phosphate. This is the penultimate step in the biosynthesis of riboflavin. The polypeptide is 6,7-dimethyl-8-ribityllumazine synthase (Leptothrix cholodnii (strain ATCC 51168 / LMG 8142 / SP-6) (Leptothrix discophora (strain SP-6))).